A 363-amino-acid chain; its full sequence is Histidinol-phosphate aminotransferase (363 aa).

Lys227 carries the post-translational modification N6-(pyridoxal phosphate)lysine.

This sequence belongs to the class-II pyridoxal-phosphate-dependent aminotransferase family. Histidinol-phosphate aminotransferase subfamily. In terms of assembly, homodimer. The cofactor is pyridoxal 5'-phosphate.

The enzyme catalyses L-histidinol phosphate + 2-oxoglutarate = 3-(imidazol-4-yl)-2-oxopropyl phosphate + L-glutamate. It participates in amino-acid biosynthesis; L-histidine biosynthesis; L-histidine from 5-phospho-alpha-D-ribose 1-diphosphate: step 7/9. In Akkermansia muciniphila (strain ATCC BAA-835 / DSM 22959 / JCM 33894 / BCRC 81048 / CCUG 64013 / CIP 107961 / Muc), this protein is Histidinol-phosphate aminotransferase.